Reading from the N-terminus, the 319-residue chain is UDP-N-acetylenolpyruvoylglucosamine reductase (319 aa).

One can recognise an FAD-binding PCMH-type domain in the interval 35–198; that stretch reads VGGPAEAMFK…TGCVLAGRPD (164 aa). The active site involves R178. S227 functions as the Proton donor in the catalytic mechanism. Residue E302 is part of the active site.

Belongs to the MurB family. It depends on FAD as a cofactor.

It localises to the cytoplasm. The catalysed reaction is UDP-N-acetyl-alpha-D-muramate + NADP(+) = UDP-N-acetyl-3-O-(1-carboxyvinyl)-alpha-D-glucosamine + NADPH + H(+). It functions in the pathway cell wall biogenesis; peptidoglycan biosynthesis. Cell wall formation. This Rhodospirillum rubrum (strain ATCC 11170 / ATH 1.1.1 / DSM 467 / LMG 4362 / NCIMB 8255 / S1) protein is UDP-N-acetylenolpyruvoylglucosamine reductase.